The chain runs to 241 residues: Triosephosphate isomerase (241 aa).

9–11 (NWK) lines the substrate pocket. His96 (electrophile) is an active-site residue. Glu165 acts as the Proton acceptor in catalysis. Residues Gly171, Ser204, and 225–226 (GG) contribute to the substrate site.

Belongs to the triosephosphate isomerase family. As to quaternary structure, homodimer.

The protein resides in the cytoplasm. The catalysed reaction is D-glyceraldehyde 3-phosphate = dihydroxyacetone phosphate. It functions in the pathway carbohydrate biosynthesis; gluconeogenesis. It participates in carbohydrate degradation; glycolysis; D-glyceraldehyde 3-phosphate from glycerone phosphate: step 1/1. Its function is as follows. Involved in the gluconeogenesis. Catalyzes stereospecifically the conversion of dihydroxyacetone phosphate (DHAP) to D-glyceraldehyde-3-phosphate (G3P). The chain is Triosephosphate isomerase from Trichormus variabilis (strain ATCC 29413 / PCC 7937) (Anabaena variabilis).